We begin with the raw amino-acid sequence, 150 residues long: Small ribosomal subunit protein uS11y (150 aa).

Residue S19 is modified to Phosphoserine.

The protein belongs to the universal ribosomal protein uS11 family.

The protein localises to the cytoplasm. This is Small ribosomal subunit protein uS11y (RPS14B) from Arabidopsis thaliana (Mouse-ear cress).